The sequence spans 82 residues: UPF0235 protein Pden_2174 (82 aa).

The protein belongs to the UPF0235 family.

The sequence is that of UPF0235 protein Pden_2174 from Paracoccus denitrificans (strain Pd 1222).